The sequence spans 547 residues: Chaperonin GroEL (547 aa).

ATP is bound by residues 29-32 (TLGP), 86-90 (DGTTT), Gly-413, and Asp-498.

This sequence belongs to the chaperonin (HSP60) family. As to quaternary structure, forms a cylinder of 14 subunits composed of two heptameric rings stacked back-to-back. Interacts with the co-chaperonin GroES.

The protein localises to the cytoplasm. The catalysed reaction is ATP + H2O + a folded polypeptide = ADP + phosphate + an unfolded polypeptide.. In terms of biological role, together with its co-chaperonin GroES, plays an essential role in assisting protein folding. The GroEL-GroES system forms a nano-cage that allows encapsulation of the non-native substrate proteins and provides a physical environment optimized to promote and accelerate protein folding. This Herpetosiphon aurantiacus (strain ATCC 23779 / DSM 785 / 114-95) protein is Chaperonin GroEL.